A 1310-amino-acid polypeptide reads, in one-letter code: Angiotensin-converting enzyme (1310 aa).

An N-terminal signal peptide occupies residues 1-33 (MGAAPGRRGPRLLRPPPPLLLLLLLLRPPPAAL). The Extracellular portion of the chain corresponds to 34 to 1260 (TLDPGLLPGD…GMNLDAQQAR (1227 aa)). Peptidase M2 domains are found at residues 45 to 628 (AADE…LGWP) and 647 to 1226 (VTDE…LGWP). Residues Asn59, Asn79, and Asn151 are each glycosylated (N-linked (GlcNAc...) asparagine). Cys162 and Cys170 are joined by a disulfide. A chloride-binding site is contributed by Tyr236. N-linked (GlcNAc...) asparagine glycosylation occurs at Asn323. A disulfide bridge links Cys364 with Cys382. His395 contacts Zn(2+). Residue Glu396 is the Proton acceptor 1 of the active site. The Zn(2+) site is built by His399 and Glu422. N-linked (GlcNAc...) asparagine glycans are attached at residues Asn449 and Asn513. Residue His524 is the Proton donor 1 of the active site. Arg533 contacts chloride. Cysteines 549 and 561 form a disulfide. 3 N-linked (GlcNAc...) asparagine glycosylation sites follow: Asn681, Asn699, and Asn718. A disulfide bond links Cys761 and Cys767. The chloride site is built by Arg795 and Tyr833. Asn946 is a glycosylation site (N-linked (GlcNAc...) asparagine). Cysteines 961 and 979 form a disulfide. His992 contributes to the Zn(2+) binding site. Glu993 (proton acceptor 2) is an active-site residue. Zn(2+)-binding residues include His996 and Glu1020. Chloride is bound by residues Trp1094 and Arg1098. His1122 functions as the Proton donor 2 in the catalytic mechanism. Arg1131 is a binding site for chloride. An intrachain disulfide couples Cys1147 to Cys1159. N-linked (GlcNAc...) asparagine glycosylation occurs at Asn1195. Residues 1219 to 1260 (HGEKLGWPQYTWTPNSARSEGSLPDSGRVNFLGMNLDAQQAR) are juxtamembrane stalk. Residues 1261 to 1281 (VGQWVLLFLGVALLLASLGLT) traverse the membrane as a helical segment. The Cytoplasmic portion of the chain corresponds to 1282-1310 (QRLFSIRYQSLRQPHHGPQFGSEVELRHS). At Ser1303 the chain carries Phosphoserine.

It belongs to the peptidase M2 family. As to quaternary structure, monomer and homodimer; homodimerizes following binding to an inhibitor. Interacts with calmodulin (CALM1, CALM2 or CALM3); interaction takes place in the cytoplasmic region and regulates phosphorylation and proteolytic cleavage. It depends on Zn(2+) as a cofactor. The cofactor is chloride. In terms of processing, N-glycosylated. Phosphorylated by CK2 on Ser-1303; which allows membrane retention. Phosphorylated on tyrosine residues on its extracellular part, promoting cleavage by secretase enzymes and formation of the soluble form (Angiotensin-converting enzyme, soluble form). Post-translationally, produced following proteolytic cleavage by secretase enzymes that cleave the transmembrane form in the juxtamembrane stalk region upstream of the transmembrane region. Cleavage can take place at different sites of the juxtamembrane stalk region. Testis-specific isoform is expressed in spermatocytes, adult testis.

It is found in the cell membrane. The protein resides in the cytoplasm. The protein localises to the secreted. The catalysed reaction is Release of a C-terminal dipeptide, oligopeptide-|-Xaa-Yaa, when Xaa is not Pro, and Yaa is neither Asp nor Glu. Thus, conversion of angiotensin I to angiotensin II, with increase in vasoconstrictor activity, but no action on angiotensin II.. It carries out the reaction angiotensin I + H2O = L-histidyl-L-leucine + angiotensin II. It catalyses the reaction bradykinin + H2O = L-Phe-L-Arg + bradykinin(1-7). The enzyme catalyses substance P + H2O = substance P(1-9) + L-Leu-L-Met-NH2. The catalysed reaction is substance P + H2O = substance P(1-8) + Gly-L-Leu-L-Met-NH2. It carries out the reaction substance P + H2O = L-Phe-L-Phe-Gly-L-Leu-L-Met-NH2 + substance P(1-6). It catalyses the reaction neurotensin + H2O = neurotensin(1-11) + L-isoleucyl-L-leucine. The enzyme catalyses goralatide + H2O = N-acetyl-L-seryl-L-aspartate + L-lysyl-L-proline. The catalysed reaction is Met-enkephalin + H2O = L-phenylalanyl-L-methionine + L-tyrosylglycylglycine. It carries out the reaction Leu-enkephalin + H2O = L-tyrosylglycylglycine + L-phenylalanyl-L-leucine. It catalyses the reaction Met-enkephalin-Arg-Phe + H2O = L-arginyl-L-phenylalanine + Met-enkephalin. Its activity is regulated as follows. The dipeptidyl carboxypeptidase activity is strongly activated by chloride. Specifically inhibited by lisinopril. Inhibited by mixanpril, an orally-active drug used for the treatment of hypertension. Strongly inhibited by lisinopril and captopril. Functionally, dipeptidyl carboxypeptidase that removes dipeptides from the C-terminus of a variety of circulating hormones, such as angiotensin I, bradykinin or enkephalins, thereby playing a key role in the regulation of blood pressure, electrolyte homeostasis or synaptic plasticity. Composed of two similar catalytic domains, each possessing a functional active site, with different selectivity for substrates. Plays a major role in the angiotensin-renin system that regulates blood pressure and sodium retention by the kidney by converting angiotensin I to angiotensin II, resulting in an increase of the vasoconstrictor activity of angiotensin. Also able to inactivate bradykinin, a potent vasodilator, and therefore enhance the blood pressure response. Acts as a regulator of synaptic transmission by mediating cleavage of neuropeptide hormones, such as substance P, neurotensin or enkephalins. Catalyzes degradation of different enkephalin neuropeptides (Met-enkephalin, Leu-enkephalin, Met-enkephalin-Arg-Phe and possibly Met-enkephalin-Arg-Gly-Leu). Acts as a regulator of synaptic plasticity in the nucleus accumbens of the brain by mediating cleavage of Met-enkephalin-Arg-Phe, a strong ligand of Mu-type opioid receptor OPRM1, into Met-enkephalin. Met-enkephalin-Arg-Phe cleavage by ACE decreases activation of OPRM1, leading to long-term synaptic potentiation of glutamate release. Also acts as a regulator of hematopoietic stem cell differentiation by mediating degradation of hemoregulatory peptide N-acetyl-SDKP (AcSDKP). Acts as a regulator of cannabinoid signaling pathway by mediating degradation of hemopressin, an antagonist peptide of the cannabinoid receptor CNR1. Involved in amyloid-beta metabolism by catalyzing degradation of Amyloid-beta protein 40 and Amyloid-beta protein 42 peptides, thereby preventing plaque formation. Catalyzes cleavage of cholecystokinin (maturation of Cholecystokinin-8 and Cholecystokinin-5) and Gonadoliberin-1 (both maturation and degradation) hormones. Degradation of hemoregulatory peptide N-acetyl-SDKP (AcSDKP) and amyloid-beta proteins is mediated by the N-terminal catalytic domain, while angiotensin I and cholecystokinin cleavage is mediated by the C-terminal catalytic region. Its function is as follows. Soluble form that is released in blood plasma and other body fluids following proteolytic cleavage in the juxtamembrane stalk region. Isoform produced by alternative promoter usage that is specifically expressed in spermatocytes and adult testis, and which is required for male fertility. In contrast to somatic isoforms, only contains one catalytic domain. Acts as a dipeptidyl carboxypeptidase that removes dipeptides from the C-terminus of substrates. The identity of substrates that are needed for male fertility is unknown. May also have a glycosidase activity which releases GPI-anchored proteins from the membrane by cleaving the mannose linkage in the GPI moiety. The GPIase activity was reported to be essential for the egg-binding ability of the sperm. This activity is however unclear and has been challenged by other groups, suggesting that it may be indirect. The protein is Angiotensin-converting enzyme of Oryctolagus cuniculus (Rabbit).